The following is a 195-amino-acid chain: Auxin-responsive protein IAA14 (195 aa).

Disordered stretches follow at residues 1–61 (MAAE…SPAS) and 85–107 (STAA…NKGG). The EAR-like (transcriptional repression) motif lies at 10 to 14 (LRLGL). Residues 108-191 (GLYVKVSMDG…SCKKLRIMRG (84 aa)) enclose the PB1 domain.

The protein belongs to the Aux/IAA family. In terms of assembly, homodimers and heterodimers. In terms of tissue distribution, highly expressed in flowers. Expressed in etiolated seedlings.

It is found in the nucleus. Its function is as follows. Aux/IAA proteins are short-lived transcriptional factors that function as repressors of early auxin response genes at low auxin concentrations. This Oryza sativa subsp. japonica (Rice) protein is Auxin-responsive protein IAA14 (IAA14).